The primary structure comprises 390 residues: Neuromedin-B receptor (390 aa).

Over 1 to 41 (MPPRSLSNLSFPTEANESELVPEVWEKDFLPDSDGTTAELV) the chain is Extracellular. N-linked (GlcNAc...) asparagine glycosylation is found at Asn8 and Asn16. Residues 42-65 (IRCVIPSLYLIIISVGLLGNIMLV) traverse the membrane as a helical segment. The Cytoplasmic portion of the chain corresponds to 66 to 79 (KIFLTNSAMRNVPN). The helical transmembrane segment at 80 to 99 (IFISNLAAGDLLLLLTCVPV) threads the bilayer. Residues 100–117 (DASRYFFDEWVFGKLGCK) are Extracellular-facing. Residues Cys116 and Cys198 are joined by a disulfide bond. A helical transmembrane segment spans residues 118-139 (LIPAIQLTSVGVSVFTLTALSA). The Cytoplasmic segment spans residues 140 to 156 (DRYRAIVNPMDMQTSGV). Residues 157-177 (LLWTSLKAVGIWVVSVLLAVP) traverse the membrane as a helical segment. The Extracellular segment spans residues 178-211 (EAVFSEVARIGSLDNSSFTACIPYPQTDELHPKI). The N-linked (GlcNAc...) asparagine glycan is linked to Asn192. A helical transmembrane segment spans residues 212–235 (HSVLIFLVYFLIPLVIISIYYYHI). Residues 236–266 (AKTLIKSAHNLPGEYNEHTKKQMETRKRLAK) lie on the Cytoplasmic side of the membrane. A helical membrane pass occupies residues 267 to 287 (IVLVFVGCFVFCWFPNHVLYL). Residues 288-299 (YRSFNYKEIDPS) lie on the Extracellular side of the membrane. Residues 300–327 (LGHMIVTLVARVLSFSNSCVNPFALYLL) traverse the membrane as a helical segment. Topologically, residues 328-390 (SESFRKHFNS…GHSTKQEIAL (63 aa)) are cytoplasmic. Cys341 carries S-palmitoyl cysteine lipidation. Ser352 is subject to Phosphoserine.

The protein belongs to the G-protein coupled receptor 1 family. In terms of tissue distribution, expressed in a subset of neurons of the pre-Botzinger complex. Within the pre-Botzinger complex, there is some overlap with neurons expressing Grpr with some cells expressing only Grpr or Nmbr while some cells express both. Expressed in dorsal root ganglion neurons and mast cells. Expressed in lung.

It is found in the cell membrane. Receptor for neuromedin-B. Contributes to the maintenance of basal sigh rate through signaling in the pre-Botzinger complex, a cluster of several thousand neurons in the ventrolateral medulla responsible for inspiration during respiratory activity. Contributes to the induction of sneezing following exposure to chemical irritants or allergens which causes release of NMB by nasal sensory neurons and activation of NMBR-expressing neurons in the sneeze-evoking region of the brainstem. These in turn activate neurons of the caudal ventral respiratory group, giving rise to the sneezing response. Contributes to induction of acute itch, possibly through its activation on dorsal root ganglion neurons by the NMB peptide. Plays a role in the innate immune response to influenza A virus infection by enhancing interferon alpha expression and reducing expression of IL6. Plays a role in CSF1-induced proliferation of osteoclast precursors by contributing to the positive regulation of the expression of the CSF1 receptor CSF1R. This Mus musculus (Mouse) protein is Neuromedin-B receptor (Nmbr).